The chain runs to 206 residues: ATP synthase subunit b (206 aa).

Residues 10-30 (LLKPFVSTAAICLLVAGTVVL) traverse the membrane as a helical segment.

It belongs to the ATPase B chain family. F-type ATPases have 2 components, F(1) - the catalytic core - and F(0) - the membrane proton channel. F(1) has five subunits: alpha(3), beta(3), gamma(1), delta(1), epsilon(1). F(0) has three main subunits: a(1), b(2) and c(10-14). The alpha and beta chains form an alternating ring which encloses part of the gamma chain. F(1) is attached to F(0) by a central stalk formed by the gamma and epsilon chains, while a peripheral stalk is formed by the delta and b chains.

The protein localises to the cell inner membrane. Functionally, f(1)F(0) ATP synthase produces ATP from ADP in the presence of a proton or sodium gradient. F-type ATPases consist of two structural domains, F(1) containing the extramembraneous catalytic core and F(0) containing the membrane proton channel, linked together by a central stalk and a peripheral stalk. During catalysis, ATP synthesis in the catalytic domain of F(1) is coupled via a rotary mechanism of the central stalk subunits to proton translocation. In terms of biological role, component of the F(0) channel, it forms part of the peripheral stalk, linking F(1) to F(0). The sequence is that of ATP synthase subunit b from Geobacter sulfurreducens (strain ATCC 51573 / DSM 12127 / PCA).